Reading from the N-terminus, the 159-residue chain is Xanthine dehydrogenase iron-sulfur-binding subunit (159 aa).

A 2Fe-2S ferredoxin-type domain is found at 7–82; it reads ITIECTINGM…GKEIRTLEGE (76 aa). [2Fe-2S] cluster contacts are provided by Cys-44, Cys-49, and Cys-52.

As to quaternary structure, heterotrimer of XdhA, XdhB and XdhC. It depends on [2Fe-2S] cluster as a cofactor.

It participates in purine metabolism; hypoxanthine degradation; urate from hypoxanthine: step 1/2. Iron-sulfur subunit of the xanthine dehydrogenase complex. The polypeptide is Xanthine dehydrogenase iron-sulfur-binding subunit (xdhC) (Escherichia coli O157:H7).